The chain runs to 127 residues: Cytochrome c' (127 aa).

Gln1 is subject to Pyrrolidone carboxylic acid. Heme c is bound by residues Arg12, Gln13, Asp67, Cys116, Cys119, and His120.

In terms of assembly, homodimer. In terms of processing, binds 1 heme c group covalently per subunit.

Its subcellular location is the periplasm. Functionally, cytochrome c' is the most widely occurring bacterial c-type cytochrome. Cytochromes c' are high-spin proteins and the heme has no sixth ligand. Their exact function is not known. In Alcaligenes xylosoxydans xylosoxydans (Achromobacter xylosoxidans), this protein is Cytochrome c'.